The chain runs to 422 residues: UDP-N-acetylglucosamine 1-carboxyvinyltransferase (422 aa).

Residue 22–23 (KN) participates in phosphoenolpyruvate binding. Arg93 is a UDP-N-acetyl-alpha-D-glucosamine binding site. Cys117 serves as the catalytic Proton donor. Position 117 is a 2-(S-cysteinyl)pyruvic acid O-phosphothioketal (Cys117). UDP-N-acetyl-alpha-D-glucosamine is bound by residues 122–126 (RPVDQ), Asp309, and Ile331.

The protein belongs to the EPSP synthase family. MurA subfamily.

Its subcellular location is the cytoplasm. The catalysed reaction is phosphoenolpyruvate + UDP-N-acetyl-alpha-D-glucosamine = UDP-N-acetyl-3-O-(1-carboxyvinyl)-alpha-D-glucosamine + phosphate. Its pathway is cell wall biogenesis; peptidoglycan biosynthesis. In terms of biological role, cell wall formation. Adds enolpyruvyl to UDP-N-acetylglucosamine. The chain is UDP-N-acetylglucosamine 1-carboxyvinyltransferase from Delftia acidovorans (strain DSM 14801 / SPH-1).